Consider the following 172-residue polypeptide: METKMTGTNGSVDSIVFDKPTVEDGADMWELVKNSTLDLNSSYKYIMMCEFFAETCVVAKENDELVGFVTAFIPPEKQDTVFVWQVGVDTSQRGKGLASRLLNALLERDVCENVLYLEATITPSNEASQALFKKLAQKRETEVTVSECFTEDLFPDDEHEEELTFRIGPFTK.

One can recognise an N-acetyltransferase domain in the interval 15 to 166; that stretch reads IVFDKPTVED…DEHEEELTFR (152 aa).

This sequence belongs to the acetyltransferase family. EctA subfamily.

It carries out the reaction L-2,4-diaminobutanoate + acetyl-CoA = (2S)-4-acetamido-2-aminobutanoate + CoA + H(+). The protein operates within amine and polyamine biosynthesis; ectoine biosynthesis; L-ectoine from L-aspartate 4-semialdehyde: step 2/3. In terms of biological role, catalyzes the acetylation of L-2,4-diaminobutyrate (DABA) to gamma-N-acetyl-alpha,gamma-diaminobutyric acid (ADABA) with acetyl coenzyme A. The sequence is that of L-2,4-diaminobutyric acid acetyltransferase (ectA) from Marinococcus halophilus.